Consider the following 188-residue polypeptide: dCTP deaminase (188 aa).

DCTP is bound by residues 111-116 (KSTYAR), 135-137 (TLE), Q156, Y170, and Q180. The active-site Proton donor/acceptor is the E137.

Belongs to the dCTP deaminase family. Homotrimer.

It carries out the reaction dCTP + H2O + H(+) = dUTP + NH4(+). Its pathway is pyrimidine metabolism; dUMP biosynthesis; dUMP from dCTP (dUTP route): step 1/2. In terms of biological role, catalyzes the deamination of dCTP to dUTP. The sequence is that of dCTP deaminase from Pseudomonas fluorescens (strain Pf0-1).